Reading from the N-terminus, the 502-residue chain is Arabinose import ATP-binding protein AraG (502 aa).

ABC transporter domains are found at residues 6–241 and 252–497; these read LEFD…MVGR and REVG…MVES. Residue 38–45 participates in ATP binding; that stretch reads GENGAGKS.

This sequence belongs to the ABC transporter superfamily. Arabinose importer (TC 3.A.1.2.2) family. The complex is composed of two ATP-binding proteins (AraG), two transmembrane proteins (AraH) and a solute-binding protein (AraF).

Its subcellular location is the cell inner membrane. It catalyses the reaction L-arabinose(out) + ATP + H2O = L-arabinose(in) + ADP + phosphate + H(+). Its function is as follows. Part of the ABC transporter complex AraFGH involved in arabinose import. Responsible for energy coupling to the transport system. This is Arabinose import ATP-binding protein AraG from Mannheimia succiniciproducens (strain KCTC 0769BP / MBEL55E).